A 247-amino-acid polypeptide reads, in one-letter code: Ribonuclease 3 (247 aa).

The RNase III domain occupies 21–149 (VDHQPLLDHL…LFGAIFRQHG (129 aa)). Glu62 is a binding site for Mg(2+). Asp66 is an active-site residue. Positions 135 and 138 each coordinate Mg(2+). Residue Glu138 is part of the active site. The DRBM domain maps to 176 to 244 (DWKTTLQEEL…AHQAFRKLRE (69 aa)).

Belongs to the ribonuclease III family. Homodimer. Mg(2+) serves as cofactor.

The protein localises to the cytoplasm. It carries out the reaction Endonucleolytic cleavage to 5'-phosphomonoester.. Functionally, digests double-stranded RNA. Involved in the processing of primary rRNA transcript to yield the immediate precursors to the large and small rRNAs (23S and 16S). Processes some mRNAs, and tRNAs when they are encoded in the rRNA operon. Processes pre-crRNA and tracrRNA of type II CRISPR loci if present in the organism. This chain is Ribonuclease 3, found in Corynebacterium glutamicum (strain ATCC 13032 / DSM 20300 / JCM 1318 / BCRC 11384 / CCUG 27702 / LMG 3730 / NBRC 12168 / NCIMB 10025 / NRRL B-2784 / 534).